Consider the following 274-residue polypeptide: Large ribosomal subunit protein uL2cz/uL2cy (274 aa).

2 disordered regions span residues 1–23 (MAIHLYKTSTPSTRNGAVGSQVK) and 223–274 (MNPV…RRSK).

This sequence belongs to the universal ribosomal protein uL2 family. As to quaternary structure, part of the 50S ribosomal subunit.

It localises to the plastid. The protein resides in the chloroplast. The chain is Large ribosomal subunit protein uL2cz/uL2cy (rpl2-A) from Ranunculus macranthus (Large buttercup).